A 495-amino-acid polypeptide reads, in one-letter code: Membrane-bound lytic murein transglycosylase F (495 aa).

Positions 1 to 30 are cleaved as a signal peptide; that stretch reads MSRIRHHRFIQSCLVISTLLITLTGCQVES. Residues 31-270 are non-LT domain; the sequence is EPKTKLEQIR…LLEEKYFGHV (240 aa). An LT domain region spans residues 272 to 495; sequence SFDYVDTRAF…SVSQAIETKK (224 aa). The active site involves glutamate 315.

The protein in the N-terminal section; belongs to the bacterial solute-binding protein 3 family. In the C-terminal section; belongs to the transglycosylase Slt family.

The protein resides in the cell outer membrane. The enzyme catalyses Exolytic cleavage of the (1-&gt;4)-beta-glycosidic linkage between N-acetylmuramic acid (MurNAc) and N-acetylglucosamine (GlcNAc) residues in peptidoglycan, from either the reducing or the non-reducing ends of the peptidoglycan chains, with concomitant formation of a 1,6-anhydrobond in the MurNAc residue.. Functionally, murein-degrading enzyme that degrades murein glycan strands and insoluble, high-molecular weight murein sacculi, with the concomitant formation of a 1,6-anhydromuramoyl product. Lytic transglycosylases (LTs) play an integral role in the metabolism of the peptidoglycan (PG) sacculus. Their lytic action creates space within the PG sacculus to allow for its expansion as well as for the insertion of various structures such as secretion systems and flagella. This Aliivibrio fischeri (strain ATCC 700601 / ES114) (Vibrio fischeri) protein is Membrane-bound lytic murein transglycosylase F.